Here is a 289-residue protein sequence, read N- to C-terminus: 3-hydroxy-16-methoxy-2,3-dihydrotabersonine N-methyltransferase (289 aa).

An SAM motif I region spans residues 71 to 80 (MLDVGSGLGG). Positions 134 to 142 (GKFDVVFTI) are SAM motif II. The SAM motif III stretch occupies residues 161–170 (VAAPGAAIII). A Microbody targeting signal motif is present at residues 287–289 (KSI).

This sequence belongs to the class I-like SAM-binding methyltransferase superfamily. gTMT family. In terms of assembly, homodimer. In terms of tissue distribution, mainly expressed in young leaves, and, to a lower extent, in mature leaves, flowers, stems and roots (at protein level).

It localises to the thylakoid. The protein resides in the peroxisome. The catalysed reaction is (3R)-3-hydroxy-16-methoxy-2,3-dihydrotabersonine + S-adenosyl-L-methionine = deacetoxyvindoline + S-adenosyl-L-homocysteine + H(+). Its pathway is alkaloid biosynthesis; vindoline biosynthesis. Its activity is regulated as follows. Inhibited by gamma-tocopherol. In terms of biological role, S-adenosyl-L-methionine-dependent N-methyltransferase that catalyzes a nitrogen methylation involved in vindoline biosynthesis. Displays a strict requirement for a 2,3-dihydro bond in the aspidosperma skeleton. Can use 2,3-dihydrotabersonine, 2,3-dihydro-3-hydroxytabersonine and 2,3,6,7-tetraydro-3-hydroxytabersonine as substrates, but not tabersonine, vincadifformine, 21-hydroxycyclolochnericine, tryptamine, norharmane, harmaline, catharanthine, norajmaline, ajmaline, serpentine, ajmalicine, yohimbine or gamma-tocopherol. Inactive with picrinine as substrate. The sequence is that of 3-hydroxy-16-methoxy-2,3-dihydrotabersonine N-methyltransferase from Catharanthus roseus (Madagascar periwinkle).